A 79-amino-acid polypeptide reads, in one-letter code: Acyl carrier protein (79 aa).

The 76-residue stretch at 2-77 (SEIADKVKKI…DAIDYIEKQK (76 aa)) folds into the Carrier domain. Ser-37 is modified (O-(pantetheine 4'-phosphoryl)serine).

It belongs to the acyl carrier protein (ACP) family. Post-translationally, 4'-phosphopantetheine is transferred from CoA to a specific serine of apo-ACP by AcpS. This modification is essential for activity because fatty acids are bound in thioester linkage to the sulfhydryl of the prosthetic group.

Its subcellular location is the cytoplasm. Its pathway is lipid metabolism; fatty acid biosynthesis. Its function is as follows. Carrier of the growing fatty acid chain in fatty acid biosynthesis. This is Acyl carrier protein from Gluconacetobacter diazotrophicus (strain ATCC 49037 / DSM 5601 / CCUG 37298 / CIP 103539 / LMG 7603 / PAl5).